Here is a 396-residue protein sequence, read N- to C-terminus: Aspartate aminotransferase (396 aa).

Positions 34, 130, and 183 each coordinate L-aspartate. An N6-(pyridoxal phosphate)lysine modification is found at Lys-246. An L-aspartate-binding site is contributed by Arg-374.

It belongs to the class-I pyridoxal-phosphate-dependent aminotransferase family. As to quaternary structure, homodimer. Pyridoxal 5'-phosphate serves as cofactor.

The protein localises to the cytoplasm. It catalyses the reaction L-aspartate + 2-oxoglutarate = oxaloacetate + L-glutamate. This chain is Aspartate aminotransferase (aspC), found in Escherichia coli (strain K12).